Consider the following 358-residue polypeptide: Mannonate dehydratase (358 aa).

It belongs to the mannonate dehydratase family. The cofactor is Fe(2+). It depends on Mn(2+) as a cofactor.

The enzyme catalyses D-mannonate = 2-dehydro-3-deoxy-D-gluconate + H2O. It functions in the pathway carbohydrate metabolism; pentose and glucuronate interconversion. Catalyzes the dehydration of D-mannonate. The polypeptide is Mannonate dehydratase (Shouchella clausii (strain KSM-K16) (Alkalihalobacillus clausii)).